A 428-amino-acid polypeptide reads, in one-letter code: Peptidase B (428 aa).

Lys195 and Asp200 together coordinate Mn(2+). Residue Lys207 is part of the active site. Residues Asp218, Asp277, and Glu279 each contribute to the Mn(2+) site. Arg281 is an active-site residue.

Belongs to the peptidase M17 family. Homohexamer. It depends on Mn(2+) as a cofactor.

It localises to the cytoplasm. It carries out the reaction Release of an N-terminal amino acid, Xaa, from a peptide or arylamide. Xaa is preferably Glu or Asp but may be other amino acids, including Leu, Met, His, Cys and Gln.. Functionally, probably plays an important role in intracellular peptide degradation. The sequence is that of Peptidase B from Cronobacter sakazakii (strain ATCC BAA-894) (Enterobacter sakazakii).